Consider the following 729-residue polypeptide: Capsid protein VP1 (729 aa).

A compositionally biased stretch (basic residues) spans 1–10; the sequence is MAPPAKRAKR. 3 disordered regions span residues 1 to 39, 96 to 115, and 130 to 185; these read MAPP…DAAA, LATD…KRTR, and KLTS…VGVS. Positions 4–13 match the Nuclear localization signal motif; that stretch reads PAKRAKRGWV. The tract at residues 19-64 is phospholipase A2-like; sequence YLGPGNSLDQGEPTNPSDAAAKEHDEAYDQYIKSGKNPYLYFSAAD. Over residues 25–35 the composition is skewed to polar residues; sequence SLDQGEPTNPS. Over residues 132–142 the composition is skewed to low complexity; that stretch reads TSSAAQQSSQT. Residues 168 to 184 are compositionally biased toward gly residues; the sequence is GPGGSGGGGSGGGGVGV. Asn-325 provides a ligand contact to Mg(2+).

The protein belongs to the parvoviridae capsid protein family.

The protein localises to the virion. The protein resides in the host nucleus. In terms of biological role, capsid protein self-assembles to form an icosahedral capsid with a T=1 symmetry, about 22 nm in diameter, and consisting of 60 copies of two size variants of the capsid proteins, VP1 and VP2, which differ by the presence of an N-terminal extension in the minor protein VP1. The capsid encapsulates the genomic ssDNA. Capsid proteins are responsible for the attachment to host cell receptors. This attachment induces virion internalization predominantly through clathrin-dependent endocytosis. Binding to the host receptors also induces capsid rearrangements leading to surface exposure of VP1 N-terminus, specifically its phospholipase A2-like region and putative nuclear localization signal(s). VP1 N-terminus might serve as a lipolytic enzyme to breach the endosomal membrane during entry into host cell and might contribute to virus transport to the nucleus. This is Capsid protein VP1 from Mus musculus (Mouse).